The sequence spans 960 residues: Dynamin-like GTPase OPA1, mitochondrial (960 aa).

A mitochondrion-targeting transit peptide spans 1-87; it reads MWRLRRAAVA…IKYGYQPRRN (87 aa). Topologically, residues 88–96 are mitochondrial matrix; that stretch reads FWPARLATR. Residues 97 to 113 traverse the membrane as a helical segment; the sequence is LLKLRYLILGSAVGGGY. At 114-770 the chain is on the mitochondrial intermembrane side; that stretch reads TAKKTFDQWK…NAIENMVGPD (657 aa). 2 consecutive short sequence motifs (LQQQIQ motif) follow at residues 181-186 and 217-222; these read DFFTSG and QLQEEL. Positions 210–254 form a coiled coil; sequence SDKEKIDQLQEELLHTQLKYQRILERLEKENKELRKLVLQKDDKG. Residue K228 is modified to N6-acetyllysine. Residues 235 to 240 carry the LQQQIQ motif motif; the sequence is RLEKEN. In terms of domain architecture, Dynamin-type G spans 285-561; sequence QDHLPRVVVV…FWKMVRESVE (277 aa). Positions 295–302 are G1 motif; that stretch reads GDQSAGKT. GTP-binding residues include S298, G300, K301, T302, S303, and G317. T302 is a binding site for Mg(2+). The G2 motif stretch occupies residues 321-324; the sequence is MMTR. Mg(2+)-binding residues include T323 and D398. The G3 motif stretch occupies residues 398-401; that stretch reads DLPG. Positions 467–470 are G4 motif; sequence TKVD. 5 residues coordinate GTP: K468, D470, T503, G506, and N507. Positions 501 to 504 are G5 motif; sequence VVTG. Stalk region regions lie at residues 589 to 836 and 874 to 928; these read DRNE…IKDT and CNDV…IKLL. A paddle region region spans residues 736–856; sequence SDKQQWDAAI…KTALNHCNLC (121 aa). Residues 771–781 lie within the membrane without spanning it; it reads WKKRWLYWKNR. Topologically, residues 782 to 960 are mitochondrial intermembrane; sequence TQEQCVHNET…AFIEALHQEK (179 aa). Residues C856 and C874 are joined by a disulfide bond. A coiled-coil region spans residues 895–960; it reads RQQLTNTEVR…AFIEALHQEK (66 aa).

It belongs to the TRAFAC class dynamin-like GTPase superfamily. Dynamin/Fzo/YdjA family. In terms of assembly, oligomeric complex consisting of membrane-bound and soluble forms of OPA1. Interacts with RCC1L; RCC1L acts as a guanine nucleotide exchange factor (GEF) for OPA1 by exchanging bound GDP for free GTP. Interacts with CHCHD3 and IMMT; these interactions occur preferentially with soluble OPA1 forms. Interacts with PRELID1. Cleaved by OMA1 or YME1L downstream of the transmembrane region in response to different signals to generate soluble forms. Cleaved by OMA1 at position S1 following stress conditions, generating the short soluble form (Dynamin-like GTPase OPA1, short form; S-OPA1). AFG3L2 is involved in the regulation of OMA1-dependent processing of OPA1. PARL-dependent proteolytic processing releases an antiapoptotic soluble form not required for mitochondrial fusion. In terms of processing, cleavage at position S2 by YME1L is required to mediate oxidative phosphorylation (OXPHOS)-induced mitochondrial fusion. Cleavage occurs in the sequence motif Leu-Gln-Gln-Gln-Ile-Gln (LQQQIQ). Post-translationally, cleavage at position S2 by YME1L is required to mediate oxidative phosphorylation (OXPHOS)-induced mitochondrial fusion. Cleavage occurs in the sequence motif Leu-Gln-Gln-Gln-Ile-Gln (LQQQIQ). Cleavage at position S3 by YME1L is required for membrane tubulation. Cleavage at position S3 by YME1L is required for membrane tubulation. As to expression, highly expressed in retina. Also expressed in brain, testis, heart and skeletal muscle. Low levels of all isoforms expressed in a variety of tissues. Expressed in retina, skeletal muscle, heart, lung, ovary, colon, thyroid gland, leukocytes and fetal brain. Low levels of all isoforms expressed in a variety of tissues. In terms of tissue distribution, isoform 2 expressed in colon, liver, kidney, thyroid gland and leukocytes.

It is found in the mitochondrion inner membrane. Its subcellular location is the mitochondrion intermembrane space. The enzyme catalyses GTP + H2O = GDP + phosphate + H(+). With respect to regulation, activated by guanine nucleotide exchange factor RCC1L. Functionally, dynamin-related GTPase that is essential for normal mitochondrial morphology by mediating fusion of the mitochondrial inner membranes, regulating cristae morphology and maintaining respiratory chain function. Exists in two forms: the transmembrane, long form (Dynamin-like GTPase OPA1, long form; L-OPA1), which is tethered to the inner mitochondrial membrane, and the short soluble form (Dynamin-like GTPase OPA1, short form; S-OPA1), which results from proteolytic cleavage and localizes in the intermembrane space. Both forms (L-OPA1 and S-OPA1) cooperate to catalyze the fusion of the mitochondrial inner membrane. The equilibrium between L-OPA1 and S-OPA1 is essential: excess levels of S-OPA1, produced by cleavage by OMA1 following loss of mitochondrial membrane potential, lead to an impaired equilibrium between L-OPA1 and S-OPA1, inhibiting mitochondrial fusion. The balance between L-OPA1 and S-OPA1 also influences cristae shape and morphology. Involved in remodeling cristae and the release of cytochrome c during apoptosis. Proteolytic processing by PARL in response to intrinsic apoptotic signals may lead to disassembly of OPA1 oligomers and release of the caspase activator cytochrome C (CYCS) into the mitochondrial intermembrane space. Acts as a regulator of T-helper Th17 cells, which are characterized by cells with fused mitochondria with tight cristae, by mediating mitochondrial membrane remodeling: OPA1 is required for interleukin-17 (IL-17) production. Its role in mitochondrial morphology is required for mitochondrial genome maintenance. Its function is as follows. Constitutes the transmembrane long form (L-OPA1) that plays a central role in mitochondrial inner membrane fusion and cristae morphology. L-OPA1 and the soluble short form (S-OPA1) form higher-order helical assemblies that coordinate the fusion of mitochondrial inner membranes. Inner membrane-anchored L-OPA1 molecules initiate membrane remodeling by recruiting soluble S-OPA1 to rapidly polymerize into a flexible cylindrical scaffold encaging the mitochondrial inner membrane. Once at the membrane surface, the formation of S-OPA1 helices induce bilayer curvature. OPA1 dimerization through the paddle region, which inserts into cardiolipin-containing membrane, promotes GTP hydrolysis and the helical assembly of a flexible OPA1 lattice on the membrane, which drives membrane curvature and mitochondrial fusion. Plays a role in the maintenance and remodeling of mitochondrial cristae, some invaginations of the mitochondrial inner membrane that provide an increase in the surface area. Probably acts by forming helical filaments at the inside of inner membrane tubes with the shape and dimensions of crista junctions. The equilibrium between L-OPA1 and S-OPA1 influences cristae shape and morphology: increased L-OPA1 levels promote cristae stacking and elongated mitochondria, while increased S-OPA1 levels correlated with irregular cristae packing and round mitochondria shape. In terms of biological role, constitutes the soluble short form (S-OPA1) generated by cleavage by OMA1, which plays a central role in mitochondrial inner membrane fusion and cristae morphology. The transmembrane long form (L-OPA1) and the S-OPA1 form higher-order helical assemblies that coordinate the fusion of mitochondrial inner membranes. Inner membrane-anchored L-OPA1 molecules initiate membrane remodeling by recruiting soluble S-OPA1 to rapidly polymerize into a flexible cylindrical scaffold encaging the mitochondrial inner membrane. Once at the membrane surface, the formation of S-OPA1 helices induce bilayer curvature. OPA1 dimerization through the paddle region, which inserts into cardiolipin-containing membrane, promotes GTP hydrolysis and the helical assembly of a flexible OPA1 lattice on the membrane, which drives membrane curvature and mitochondrial fusion. Excess levels of S-OPA1 produced by cleavage by OMA1 following stress conditions that induce loss of mitochondrial membrane potential, lead to an impaired equilibrium between L-OPA1 and S-OPA1, thereby inhibiting mitochondrial fusion. Involved in mitochondrial safeguard in response to transient mitochondrial membrane depolarization by mediating flickering: cleavage by OMA1 leads to excess production of S-OPA1, preventing mitochondrial hyperfusion. Plays a role in the maintenance and remodeling of mitochondrial cristae, some invaginations of the mitochondrial inner membrane that provide an increase in the surface area. Probably acts by forming helical filaments at the inside of inner membrane tubes with the shape and dimensions of crista junctions. The equilibrium between L-OPA1 and S-OPA1 influences cristae shape and morphology: increased L-OPA1 levels promote cristae stacking and elongated mitochondria, while increased S-OPA1 levels correlated with irregular cristae packing and round mitochondria shape. Coexpression of isoform 1 with shorter alternative products is required for optimal activity in promoting mitochondrial fusion. Functionally, isoforms that contain the alternative exon 4b are required for mitochondrial genome maintenance, possibly by anchoring the mitochondrial nucleoids to the inner mitochondrial membrane. This is Dynamin-like GTPase OPA1, mitochondrial from Homo sapiens (Human).